The sequence spans 66 residues: MKAAELRNLTNEELMNLLEEKKRTLMNLRFQNVLGQLNDHSQISKTKKDIARIKTILRERELGVRR.

This sequence belongs to the universal ribosomal protein uL29 family.

This Thermosipho melanesiensis (strain DSM 12029 / CIP 104789 / BI429) protein is Large ribosomal subunit protein uL29.